Reading from the N-terminus, the 253-residue chain is GTP cyclohydrolase III 2 (253 aa).

Positions 102–125 (LRDAGSAQDENRQEALSHRSPPGF) are disordered.

The protein belongs to the archaeal-type GTP cyclohydrolase family.

The enzyme catalyses GTP + 3 H2O = 2-amino-5-formylamino-6-(5-phospho-D-ribosylamino)pyrimidin-4(3H)-one + 2 phosphate + 2 H(+). Its function is as follows. Catalyzes the formation of 2-amino-5-formylamino-6-ribofuranosylamino-4(3H)-pyrimidinone ribonucleotide monophosphate and inorganic phosphate from GTP. Also has an independent pyrophosphate phosphohydrolase activity. The protein is GTP cyclohydrolase III 2 (gch32) of Halobacterium salinarum (strain ATCC 700922 / JCM 11081 / NRC-1) (Halobacterium halobium).